The primary structure comprises 446 residues: MSDYLSVTSLTKYLKMKFDRDPYLERVYLTGQVSNYRRRPSHQYFSLKDEGAVIQATIWAGVFKKIGFDLEEGMKINVVGRVQIYEPSGSYSLIIEKAEPDGIGALALQFEQLRKKLTAEGYFDDRHKQPLPNFVKKIGVITSPSGAVIRDIITTVSRRFPGVEILLFPTKVQGDGAAQEIVENIQKANQREDLDLLIVGRGGGSIEDLWAFNEEIVVQSIFESRLPVISSVGHETDTTLADFVADRRAATPTAAAELATPISKADTLAWIRERQNRAYQACLRRIQYNQERLAKLSQSVVFRQPERLYDGYLQKLDHLTTRLETFMSQDFERKQKSAEFLRQRLHGLNLSTRVKNYQDRRESLQRLLVTTTKNTINGNRVRLEKAQDALLSLDTSRIVARGYAIVNKNDKPLTTIKDITEGEQLTIQMRDGQLEVEVKNVNEKNI.

Belongs to the XseA family. As to quaternary structure, heterooligomer composed of large and small subunits.

It is found in the cytoplasm. It carries out the reaction Exonucleolytic cleavage in either 5'- to 3'- or 3'- to 5'-direction to yield nucleoside 5'-phosphates.. Bidirectionally degrades single-stranded DNA into large acid-insoluble oligonucleotides, which are then degraded further into small acid-soluble oligonucleotides. This is Exodeoxyribonuclease 7 large subunit from Streptococcus thermophilus (strain CNRZ 1066).